Here is a 131-residue protein sequence, read N- to C-terminus: D-ribose pyranase (131 aa).

Histidine 20 (proton donor) is an active-site residue. Residues aspartate 28, histidine 98, and 120 to 122 (YAN) each bind substrate.

The protein belongs to the RbsD / FucU family. RbsD subfamily. In terms of assembly, homodecamer.

Its subcellular location is the cytoplasm. It catalyses the reaction beta-D-ribopyranose = beta-D-ribofuranose. It participates in carbohydrate metabolism; D-ribose degradation; D-ribose 5-phosphate from beta-D-ribopyranose: step 1/2. In terms of biological role, catalyzes the interconversion of beta-pyran and beta-furan forms of D-ribose. The polypeptide is D-ribose pyranase (Bacillus anthracis (strain A0248)).